Reading from the N-terminus, the 361-residue chain is Peptidyl-prolyl cis-trans isomerase CYP40 (361 aa).

Positions 7–172 (FMDISIGGEL…QDVVIHDCGE (166 aa)) constitute a PPIase cyclophilin-type domain. TPR repeat units lie at residues 212 to 245 (VDFV…LDIC) and 298 to 331 (VKAL…EPND).

The protein belongs to the cyclophilin-type PPIase family. In terms of tissue distribution, expressed at low levels in seedlings, roots, shoots, leaves, stems, inflorescences, flowers and siliques, with highest levels dividing tissues.

It is found in the cytoplasm. The catalysed reaction is [protein]-peptidylproline (omega=180) = [protein]-peptidylproline (omega=0). Binds cyclosporin A (CsA). CsA mediates some of its effects via an inhibitory action on PPIase. PPIases accelerate the folding of proteins. It catalyzes the cis-trans isomerization of proline imidic peptide bonds in oligopeptides. Involved in promoting the expression of the juvenile phase of vegetative development, and, to a lower extent, in regulating the positioning of floral buds, floral morphogenesis and the expression of HSPs. Collaboratively with RBL and ULT1, influences floral meristem (FM) determinacy in an AGAMOUS and SUPERMAN-dependent manner, thus contributing to the floral developmental homeostasis. This Arabidopsis thaliana (Mouse-ear cress) protein is Peptidyl-prolyl cis-trans isomerase CYP40.